Here is a 218-residue protein sequence, read N- to C-terminus: NAD(P)H-quinone oxidoreductase subunit I (218 aa).

2 consecutive 4Fe-4S ferredoxin-type domains span residues G55–V84 and R95–E124. [4Fe-4S] cluster contacts are provided by C64, C67, C70, C74, C104, C107, C110, and C114. The interval L192–G218 is disordered.

It belongs to the complex I 23 kDa subunit family. As to quaternary structure, NDH-1 is composed of at least 11 different subunits. It depends on [4Fe-4S] cluster as a cofactor.

The protein resides in the cellular thylakoid membrane. The enzyme catalyses a plastoquinone + NADH + (n+1) H(+)(in) = a plastoquinol + NAD(+) + n H(+)(out). The catalysed reaction is a plastoquinone + NADPH + (n+1) H(+)(in) = a plastoquinol + NADP(+) + n H(+)(out). Functionally, NDH-1 shuttles electrons from an unknown electron donor, via FMN and iron-sulfur (Fe-S) centers, to quinones in the respiratory and/or the photosynthetic chain. The immediate electron acceptor for the enzyme in this species is believed to be plastoquinone. Couples the redox reaction to proton translocation, and thus conserves the redox energy in a proton gradient. The sequence is that of NAD(P)H-quinone oxidoreductase subunit I from Prochlorococcus marinus (strain MIT 9303).